Consider the following 293-residue polypeptide: Large ribosomal subunit protein uL4 (293 aa).

Composition is skewed to basic and acidic residues over residues 1–14 (MAEELKKTTKEKTP) and 33–55 (KTTEVKKADKLEKVSKPKSESTK). 2 disordered regions span residues 1–72 (MAEE…IKSE) and 130–166 (QRQGTHSTKTRSEVSGGGKKPWKQKGTGRARAGSTRS).

This sequence belongs to the universal ribosomal protein uL4 family. In terms of assembly, part of the 50S ribosomal subunit.

One of the primary rRNA binding proteins, this protein initially binds near the 5'-end of the 23S rRNA. It is important during the early stages of 50S assembly. It makes multiple contacts with different domains of the 23S rRNA in the assembled 50S subunit and ribosome. Functionally, forms part of the polypeptide exit tunnel. This is Large ribosomal subunit protein uL4 from Mycoplasma mobile (strain ATCC 43663 / 163K / NCTC 11711) (Mesomycoplasma mobile).